The following is a 654-amino-acid chain: Smc-like protein Sph3 (654 aa).

2 coiled-coil regions span residues 135–290 and 341–503; these read TDAI…LQTV and IRGT…LTAA.

The protein belongs to the Sph1/Sph2 family.

Functionally, involved in cell-shape determination. Required for the formation of rods and wild-type-like motility. The polypeptide is Smc-like protein Sph3 (Haloferax volcanii (strain ATCC 29605 / DSM 3757 / JCM 8879 / NBRC 14742 / NCIMB 2012 / VKM B-1768 / DS2) (Halobacterium volcanii)).